The sequence spans 528 residues: NAC domain-containing protein 13 (528 aa).

Residues Leu10–Lys160 enclose the NAC domain. A DNA-binding region spans residues Val107–Lys166. The interval Glu388–Ser419 is disordered. Residues Phe499 to Met519 form a helical membrane-spanning segment.

In terms of assembly, interacts with RCD1. Expressed in roots, rosette leaves, shoot apex, stems and flowers.

It localises to the endoplasmic reticulum membrane. The protein localises to the nucleus. In terms of biological role, transcriptional activator activated by proteolytic cleavage through regulated intramembrane proteolysis (RIP). Involved in oxidative stress tolerance by mediating regulation of mitochondrial retrograde signaling during mitochondrial dysfunction. Interacts directly with the mitochondrial dysfunction DNA consensus motif 5'-CTTGNNNNNCA[AC]G-3', a cis-regulatory elements of several mitochondrial retrograde regulation-induced genes, and triggers increased oxidative stress tolerance. This is NAC domain-containing protein 13 from Arabidopsis thaliana (Mouse-ear cress).